The following is a 466-amino-acid chain: Glutamate decarboxylase beta (466 aa).

Substrate is bound by residues Thr62 and Asn83. Pyridoxal 5'-phosphate is bound by residues 126 to 127, Thr212, and His275; that span reads SS. Lys276 is subject to N6-(pyridoxal phosphate)lysine. An N6-acetyllysine mark is found at Lys446, Lys453, and Lys464.

Belongs to the group II decarboxylase family. In terms of assembly, homohexamer composed of three dimers. The cofactor is pyridoxal 5'-phosphate.

The catalysed reaction is L-glutamate + H(+) = 4-aminobutanoate + CO2. Functionally, converts glutamate to gamma-aminobutyrate (GABA), consuming one intracellular proton in the reaction. The gad system helps to maintain a near-neutral intracellular pH when cells are exposed to extremely acidic conditions. The ability to survive transit through the acidic conditions of the stomach is essential for successful colonization of the mammalian host by commensal and pathogenic bacteria. This Escherichia coli O6:H1 (strain CFT073 / ATCC 700928 / UPEC) protein is Glutamate decarboxylase beta (gadB).